Consider the following 283-residue polypeptide: uncharacterized protein (283 aa).

Transmembrane regions (helical) follow at residues 11–31, 35–55, 56–76, and 93–113; these read LFAY…YVSA, EGAL…WFGP, IYAL…MMFF, and LVVW…IHDI. A GGDEF domain is found at 162–283; it reads NSFVFLLLHM…LENEMMMNEL (122 aa).

It localises to the cell membrane. This is an uncharacterized protein from Bacillus subtilis (strain 168).